Consider the following 1246-residue polypeptide: HMG2-induced ER-remodeling protein 1 (1246 aa).

Disordered stretches follow at residues 19–241 (KGKR…GSLT), 263–288 (HHIQ…LPPI), and 816–836 (MPDA…KDEK). The segment covering 27-41 (KSAASTRTSEATTTS) has biased composition (low complexity). A compositionally biased stretch (polar residues) spans 58 to 95 (TIASPQRPLSGQNVNNELSNSKPAVSAEKVSQQGQVPT). S102 carries the post-translational modification Phosphoserine. T128 is modified (phosphothreonine). 2 stretches are compositionally biased toward low complexity: residues 154–163 (RSSSISTSLN) and 211–230 (SKIS…PSSS). Basic and acidic residues predominate over residues 271–282 (SGREQDSPHSES). S277 carries the post-translational modification Phosphoserine. Residue S1013 is modified to Phosphoserine. 2 stretches are compositionally biased toward polar residues: residues 1109–1133 (SSRH…TPDS) and 1200–1215 (SRSP…QQKA). Disordered stretches follow at residues 1109-1157 (SSRH…LPKI) and 1192-1224 (SLYG…LVED). Phosphothreonine is present on T1130. S1200, S1204, and S1207 each carry phosphoserine.

It belongs to the GIP3/HER1 family. May interact with ribosomes.

Its subcellular location is the cytoplasm. In terms of biological role, required for HMG2-induced endoplasmic reticulum-remodeling. The chain is HMG2-induced ER-remodeling protein 1 (HER1) from Saccharomyces cerevisiae (strain ATCC 204508 / S288c) (Baker's yeast).